The following is a 267-amino-acid chain: Pyridoxine 5'-phosphate synthase (267 aa).

Asparagine 8 provides a ligand contact to 3-amino-2-oxopropyl phosphate. 10-11 (DH) serves as a coordination point for 1-deoxy-D-xylulose 5-phosphate. Position 19 (arginine 19) interacts with 3-amino-2-oxopropyl phosphate. Residue histidine 44 is the Proton acceptor of the active site. Positions 46 and 51 each coordinate 1-deoxy-D-xylulose 5-phosphate. The active-site Proton acceptor is the glutamate 71. Threonine 101 is a 1-deoxy-D-xylulose 5-phosphate binding site. The active-site Proton donor is the histidine 219. Residues glycine 220 and 241–242 (GH) contribute to the 3-amino-2-oxopropyl phosphate site.

The protein belongs to the PNP synthase family. Homooctamer; tetramer of dimers.

It localises to the cytoplasm. The enzyme catalyses 3-amino-2-oxopropyl phosphate + 1-deoxy-D-xylulose 5-phosphate = pyridoxine 5'-phosphate + phosphate + 2 H2O + H(+). It functions in the pathway cofactor biosynthesis; pyridoxine 5'-phosphate biosynthesis; pyridoxine 5'-phosphate from D-erythrose 4-phosphate: step 5/5. In terms of biological role, catalyzes the complicated ring closure reaction between the two acyclic compounds 1-deoxy-D-xylulose-5-phosphate (DXP) and 3-amino-2-oxopropyl phosphate (1-amino-acetone-3-phosphate or AAP) to form pyridoxine 5'-phosphate (PNP) and inorganic phosphate. In Helicobacter hepaticus (strain ATCC 51449 / 3B1), this protein is Pyridoxine 5'-phosphate synthase.